Reading from the N-terminus, the 175-residue chain is Anterior gradient protein 2 homolog (175 aa).

Positions 1–20 (MEKISVSAFLLLVALSYTLA) are cleaved as a signal peptide. Residues 21 to 40 (RDTTVKPAAKKDTKDSRPKL) form a required to promote cell adhesion region. 2 short sequence motifs (homodimer stabilization; interchain) span residues 45–54 (SRGWGDQLIW) and 60–67 (EALYKSKT).

The protein belongs to the AGR family. Monomer and homodimer. Interacts with LYPD3 and DAG1 (alphaDAG1). Interacts with MUC2; disulfide-linked.

It localises to the secreted. The protein localises to the endoplasmic reticulum. Functionally, required for MUC2 post-transcriptional synthesis and secretion. May play a role in the production of mucus by intestinal cells. Proto-oncogene that may play a role in cell migration, cell differentiation and cell growth. Promotes cell adhesion. This Pongo abelii (Sumatran orangutan) protein is Anterior gradient protein 2 homolog (AGR2).